Here is a 373-residue protein sequence, read N- to C-terminus: Probable peptidoglycan glycosyltransferase FtsW (373 aa).

A run of 9 helical transmembrane segments spans residues 15 to 35 (LVIL…VYSA), 48 to 68 (FYFL…MAVA), 80 to 100 (AVPI…PGIG), 144 to 164 (FFST…LILL), 168 to 188 (DLGA…AAGT), 192 to 212 (YIIA…MNVD), 278 to 298 (LGLI…LRGV), 311 to 331 (FLAF…MAVV), and 342 to 362 (LPFI…VGIL).

The protein belongs to the SEDS family. FtsW subfamily.

The protein resides in the cell inner membrane. It catalyses the reaction [GlcNAc-(1-&gt;4)-Mur2Ac(oyl-L-Ala-gamma-D-Glu-L-Lys-D-Ala-D-Ala)](n)-di-trans,octa-cis-undecaprenyl diphosphate + beta-D-GlcNAc-(1-&gt;4)-Mur2Ac(oyl-L-Ala-gamma-D-Glu-L-Lys-D-Ala-D-Ala)-di-trans,octa-cis-undecaprenyl diphosphate = [GlcNAc-(1-&gt;4)-Mur2Ac(oyl-L-Ala-gamma-D-Glu-L-Lys-D-Ala-D-Ala)](n+1)-di-trans,octa-cis-undecaprenyl diphosphate + di-trans,octa-cis-undecaprenyl diphosphate + H(+). Its pathway is cell wall biogenesis; peptidoglycan biosynthesis. In terms of biological role, peptidoglycan polymerase that is essential for cell division. This is Probable peptidoglycan glycosyltransferase FtsW from Geobacter sulfurreducens (strain DL-1 / KN400).